We begin with the raw amino-acid sequence, 448 residues long: Fibulin-5 (448 aa).

A signal peptide spans methionine 1 to alanine 23. The EGF-like 1; calcium-binding domain maps to aspartate 42–asparagine 82. Intrachain disulfides connect cysteine 46-cysteine 59, cysteine 53-cysteine 68, cysteine 131-cysteine 144, cysteine 138-cysteine 153, cysteine 155-cysteine 166, cysteine 172-cysteine 181, cysteine 177-cysteine 190, cysteine 192-cysteine 205, cysteine 211-cysteine 221, cysteine 217-cysteine 230, cysteine 232-cysteine 245, cysteine 251-cysteine 262, cysteine 258-cysteine 271, cysteine 273-cysteine 286, cysteine 292-cysteine 305, cysteine 299-cysteine 314, and cysteine 320-cysteine 332. The Cell attachment site signature appears at arginine 54–aspartate 56. The 41-residue stretch at aspartate 127–leucine 167 folds into the EGF-like 2; calcium-binding domain. In terms of domain architecture, EGF-like 3; calcium-binding spans aspartate 168–glutamine 206. The EGF-like 4; calcium-binding domain occupies aspartate 207 to serine 246. Residues cysteine 245 to phenylalanine 448 are interaction with LOXL1. The region spanning aspartate 247–glutamine 287 is the EGF-like 5; calcium-binding domain. Residues asparagine 283 and asparagine 296 are each glycosylated (N-linked (GlcNAc...) asparagine). An EGF-like 6; calcium-binding domain is found at aspartate 288 to methionine 333.

Belongs to the fibulin family. Homodimer. Monomer, homodimerizes in presence of Ca(2+). Interacts with ELN. Interacts (via N-terminus) with the integrins ITGAV/ITGB3, ITGAV/ITGB5 and ITGA9/ITGB1. Interacts with FBN1 (via N-terminal domain). Forms a ternary complex with ELN and FBN1. Interacts with EFEMP2 with moderate affinity. Interacts with LOXL1. Post-translationally, N-glycosylated.

It is found in the secreted. Its subcellular location is the extracellular space. The protein resides in the extracellular matrix. In terms of biological role, essential for elastic fiber formation, is involved in the assembly of continuous elastin (ELN) polymer and promotes the interaction of microfibrils and ELN. Stabilizes and organizes elastic fibers in the skin, lung and vasculature. Promotes adhesion of endothelial cells through interaction of integrins and the RGD motif. Vascular ligand for integrin receptors which may play a role in vascular development and remodeling. May act as an adapter that mediates the interaction between FBN1 and ELN. This is Fibulin-5 (Fbln5) from Rattus norvegicus (Rat).